The primary structure comprises 420 residues: ATP phosphoribosyltransferase regulatory subunit (420 aa).

It belongs to the class-II aminoacyl-tRNA synthetase family. HisZ subfamily. In terms of assembly, heteromultimer composed of HisG and HisZ subunits.

It is found in the cytoplasm. It functions in the pathway amino-acid biosynthesis; L-histidine biosynthesis; L-histidine from 5-phospho-alpha-D-ribose 1-diphosphate: step 1/9. In terms of biological role, required for the first step of histidine biosynthesis. May allow the feedback regulation of ATP phosphoribosyltransferase activity by histidine. This is ATP phosphoribosyltransferase regulatory subunit from Bacillus cereus (strain G9842).